A 154-amino-acid polypeptide reads, in one-letter code: Large ribosomal subunit protein uL23 (154 aa).

Belongs to the universal ribosomal protein uL23 family.

This protein binds to a specific region on the 26S rRNA. In Fritillaria agrestis (Stinkbells), this protein is Large ribosomal subunit protein uL23 (RPL23A).